Here is a 248-residue protein sequence, read N- to C-terminus: 5'-nucleotidase SurE (248 aa).

A divalent metal cation-binding residues include D8, D9, S39, and N91.

Belongs to the SurE nucleotidase family. A divalent metal cation serves as cofactor.

The protein resides in the cytoplasm. The catalysed reaction is a ribonucleoside 5'-phosphate + H2O = a ribonucleoside + phosphate. Functionally, nucleotidase that shows phosphatase activity on nucleoside 5'-monophosphates. The protein is 5'-nucleotidase SurE of Marinomonas sp. (strain MWYL1).